Consider the following 267-residue polypeptide: Carboxy-S-adenosyl-L-methionine synthase (267 aa).

Positions 1–11 (MPNRDTQSQND) are enriched in polar residues. Positions 1 to 25 (MPNRDTQSQNDTPRHSPEAAEPQRD) are disordered. Positions 12-24 (TPRHSPEAAEPQR) are enriched in basic and acidic residues. S-adenosyl-L-methionine contacts are provided by residues Y59, 84–86 (GCS), 109–110 (DN), 137–138 (DI), N152, and R219.

It belongs to the class I-like SAM-binding methyltransferase superfamily. Cx-SAM synthase family. In terms of assembly, homodimer.

The enzyme catalyses prephenate + S-adenosyl-L-methionine = carboxy-S-adenosyl-L-methionine + 3-phenylpyruvate + H2O. Catalyzes the conversion of S-adenosyl-L-methionine (SAM) to carboxy-S-adenosyl-L-methionine (Cx-SAM). The sequence is that of Carboxy-S-adenosyl-L-methionine synthase from Yersinia pseudotuberculosis serotype O:1b (strain IP 31758).